Reading from the N-terminus, the 1006-residue chain is Cytosolic carboxypeptidase 3 (1006 aa).

The region spanning 304–576 (YPYTYSNLQE…HFCDSLLDYC (273 aa)) is the Peptidase M14 domain. Residues histidine 368, glutamate 371, and histidine 464 each coordinate Zn(2+). Glutamate 540 (proton donor/acceptor) is an active-site residue. The disordered stretch occupies residues 790–810 (ESHHQLKSKAKRCSSFQSKRT).

Belongs to the peptidase M14 family. Zn(2+) serves as cofactor. In terms of tissue distribution, widely expressed. Expressed abundantly in tissues with m otile cilia such as testis, lung and trachea. Abundantly expressed in pituitary and kidney, moderately expressed in brain, eye, fat, pancreas, stomach, and adrenal.

The protein localises to the cytoplasm. It is found in the cytosol. It catalyses the reaction (L-glutamyl)(n+1)-gamma-L-glutamyl-L-glutamyl-[protein] + H2O = (L-glutamyl)(n)-gamma-L-glutamyl-L-glutamyl-[protein] + L-glutamate. Its function is as follows. Metallocarboxypeptidase that mediates deglutamylation of tubulin and non-tubulin target proteins. Catalyzes the removal of polyglutamate side chains present on the gamma-carboxyl group of glutamate residues within the C-terminal tail of tubulin protein. Specifically cleaves tubulin long-side-chains, while it is not able to remove the branching point glutamate. Also catalyzes the removal of polyglutamate residues from the carboxy-terminus of non-tubulin proteins such as MYLK. May catalyze the hydrolysis of aspartate from the carboxy-terminus of target proteins. Does not show detyrosinase or deglycylase activities from the carboxy-terminus of target proteins. This is Cytosolic carboxypeptidase 3 from Mus musculus (Mouse).